A 634-amino-acid polypeptide reads, in one-letter code: Probable beta-glucosidase C (634 aa).

A signal peptide spans 1 to 19; it reads MRIDCTVASLTALASGCQA. Residues asparagine 90, asparagine 112, asparagine 219, and asparagine 270 are each glycosylated (N-linked (GlcNAc...) asparagine). Aspartate 337 is a catalytic residue. 4 N-linked (GlcNAc...) asparagine glycosylation sites follow: asparagine 360, asparagine 476, asparagine 484, and asparagine 524.

Belongs to the glycosyl hydrolase 3 family.

Its subcellular location is the secreted. The catalysed reaction is Hydrolysis of terminal, non-reducing beta-D-glucosyl residues with release of beta-D-glucose.. The protein operates within glycan metabolism; cellulose degradation. Functionally, beta-glucosidases are one of a number of cellulolytic enzymes involved in the degradation of cellulosic biomass. Catalyzes the last step releasing glucose from the inhibitory cellobiose. This chain is Probable beta-glucosidase C (bglC), found in Aspergillus flavus (strain ATCC 200026 / FGSC A1120 / IAM 13836 / NRRL 3357 / JCM 12722 / SRRC 167).